We begin with the raw amino-acid sequence, 203 residues long: Small ribosomal subunit protein uS4 (203 aa).

One can recognise an S4 RNA-binding domain in the interval arginine 93–valine 156.

Belongs to the universal ribosomal protein uS4 family. Part of the 30S ribosomal subunit. Contacts protein S5. The interaction surface between S4 and S5 is involved in control of translational fidelity.

Its function is as follows. One of the primary rRNA binding proteins, it binds directly to 16S rRNA where it nucleates assembly of the body of the 30S subunit. With S5 and S12 plays an important role in translational accuracy. This Streptococcus thermophilus (strain CNRZ 1066) protein is Small ribosomal subunit protein uS4.